We begin with the raw amino-acid sequence, 110 residues long: Cuticle protein 13 (110 aa).

This Limulus polyphemus (Atlantic horseshoe crab) protein is Cuticle protein 13.